The following is a 161-amino-acid chain: Cell wall protein YLR042C (161 aa).

The N-terminal stretch at 1–24 is a signal peptide; that stretch reads MKISQFGSLAFAPIVLLQLFIVQA. N-linked (GlcNAc...) asparagine glycans are attached at residues Asn-77, Asn-104, and Asn-120. The disordered stretch occupies residues 111-139; sequence FTPLPSSSRNETKSSQTTNTISSSTSTGG. Residues 123–137 show a composition bias toward low complexity; sequence KSSQTTNTISSSTST. Gly-139 carries the GPI-anchor amidated glycine lipid modification. Positions 140–161 are cleaved as a propeptide — removed in mature form; sequence VGSVKPCLYFVLMLETIAYLFS.

In terms of processing, the GPI-anchor is attached to the protein in the endoplasmic reticulum and serves to target the protein to the cell surface. There, the glucosamine-inositol phospholipid moiety is cleaved off and the GPI-modified mannoprotein is covalently attached via its lipidless GPI glycan remnant to the 1,6-beta-glucan of the outer cell wall layer.

It localises to the secreted. It is found in the cell wall. The protein localises to the membrane. The protein is Cell wall protein YLR042C of Saccharomyces cerevisiae (strain ATCC 204508 / S288c) (Baker's yeast).